The chain runs to 34 residues: Omega/M-ectatotoxin-Et1a subunit B (34 aa).

A disulfide bridge connects residues Cys10 and Cys32.

Belongs to the ectatomin family. Ectatomin-Et subfamily. In terms of assembly, heterodimer of an A and a B chain; disulfide-linked. Expressed by the venom gland.

The protein localises to the secreted. Its subcellular location is the target cell membrane. Its function is as follows. Algogenic for animals, human and insects. At high concentrations (0.5-1 uM), it acts as a pore-forming protein that forms nonselective cation channels both in cell and artificial membranes. It is weakly selective for cation over anions channel conductance is identical in both directions. At lower concentrations (1-10 nM), this heterodimer inhibits cardiac L-type calcium currents in isolated rat cardiac ventricular myocytes. The polypeptide is Omega/M-ectatotoxin-Et1a subunit B (Ectatomma tuberculatum (Selva ant)).